The following is a 275-amino-acid chain: 2,3,4,5-tetrahydropyridine-2,6-dicarboxylate N-succinyltransferase (275 aa).

This sequence belongs to the transferase hexapeptide repeat family.

The protein localises to the cytoplasm. It carries out the reaction (S)-2,3,4,5-tetrahydrodipicolinate + succinyl-CoA + H2O = (S)-2-succinylamino-6-oxoheptanedioate + CoA. It functions in the pathway amino-acid biosynthesis; L-lysine biosynthesis via DAP pathway; LL-2,6-diaminopimelate from (S)-tetrahydrodipicolinate (succinylase route): step 1/3. In Paraburkholderia phymatum (strain DSM 17167 / CIP 108236 / LMG 21445 / STM815) (Burkholderia phymatum), this protein is 2,3,4,5-tetrahydropyridine-2,6-dicarboxylate N-succinyltransferase.